The chain runs to 248 residues: Triosephosphate isomerase (248 aa).

9–11 (NWK) is a binding site for substrate. The active-site Electrophile is His-93. Residue Glu-163 is the Proton acceptor of the active site. Substrate-binding positions include Gly-169, Ser-208, and 229-230 (GG).

Belongs to the triosephosphate isomerase family. As to quaternary structure, homodimer.

It is found in the cytoplasm. It carries out the reaction D-glyceraldehyde 3-phosphate = dihydroxyacetone phosphate. Its pathway is carbohydrate biosynthesis; gluconeogenesis. It participates in carbohydrate degradation; glycolysis; D-glyceraldehyde 3-phosphate from glycerone phosphate: step 1/1. Its function is as follows. Involved in the gluconeogenesis. Catalyzes stereospecifically the conversion of dihydroxyacetone phosphate (DHAP) to D-glyceraldehyde-3-phosphate (G3P). The polypeptide is Triosephosphate isomerase (Jannaschia sp. (strain CCS1)).